The following is a 337-amino-acid chain: Phosphate acyltransferase (337 aa).

The protein belongs to the PlsX family. In terms of assembly, homodimer. Probably interacts with PlsY.

The protein localises to the cytoplasm. The catalysed reaction is a fatty acyl-[ACP] + phosphate = an acyl phosphate + holo-[ACP]. Its pathway is lipid metabolism; phospholipid metabolism. In terms of biological role, catalyzes the reversible formation of acyl-phosphate (acyl-PO(4)) from acyl-[acyl-carrier-protein] (acyl-ACP). This enzyme utilizes acyl-ACP as fatty acyl donor, but not acyl-CoA. This is Phosphate acyltransferase from Listeria welshimeri serovar 6b (strain ATCC 35897 / DSM 20650 / CCUG 15529 / CIP 8149 / NCTC 11857 / SLCC 5334 / V8).